Reading from the N-terminus, the 479-residue chain is UDP-N-acetylmuramoyl-L-alanyl-D-glutamate--2,6-diaminopimelate ligase (479 aa).

Ser21 lines the UDP-N-acetyl-alpha-D-muramoyl-L-alanyl-D-glutamate pocket. Residue 98–104 (GTNGKSS) participates in ATP binding. Residues 144 to 145 (TT), Ser171, Gln177, and Arg179 each bind UDP-N-acetyl-alpha-D-muramoyl-L-alanyl-D-glutamate. Lys211 carries the post-translational modification N6-carboxylysine. Meso-2,6-diaminopimelate-binding positions include Arg372, 396 to 399 (DNPR), Gly446, and Glu450. Residues 396-399 (DNPR) carry the Meso-diaminopimelate recognition motif motif.

The protein belongs to the MurCDEF family. MurE subfamily. Mg(2+) is required as a cofactor. Post-translationally, carboxylation is probably crucial for Mg(2+) binding and, consequently, for the gamma-phosphate positioning of ATP.

It localises to the cytoplasm. It catalyses the reaction UDP-N-acetyl-alpha-D-muramoyl-L-alanyl-D-glutamate + meso-2,6-diaminopimelate + ATP = UDP-N-acetyl-alpha-D-muramoyl-L-alanyl-gamma-D-glutamyl-meso-2,6-diaminopimelate + ADP + phosphate + H(+). It participates in cell wall biogenesis; peptidoglycan biosynthesis. Catalyzes the addition of meso-diaminopimelic acid to the nucleotide precursor UDP-N-acetylmuramoyl-L-alanyl-D-glutamate (UMAG) in the biosynthesis of bacterial cell-wall peptidoglycan. The polypeptide is UDP-N-acetylmuramoyl-L-alanyl-D-glutamate--2,6-diaminopimelate ligase (Rickettsia conorii (strain ATCC VR-613 / Malish 7)).